Consider the following 397-residue polypeptide: Methylthioribose kinase (397 aa).

Residues N44, K61, and 115 to 117 contribute to the ATP site; that span reads EDL. Position 233 (D233) interacts with substrate. Residue 250 to 252 participates in ATP binding; that stretch reads DPE. R340 contributes to the substrate binding site.

The protein belongs to the methylthioribose kinase family. In terms of assembly, homodimer.

It catalyses the reaction 5-(methylsulfanyl)-D-ribose + ATP = 5-(methylsulfanyl)-alpha-D-ribose 1-phosphate + ADP + H(+). Its pathway is amino-acid biosynthesis; L-methionine biosynthesis via salvage pathway; S-methyl-5-thio-alpha-D-ribose 1-phosphate from S-methyl-5'-thioadenosine (hydrolase route): step 2/2. In terms of biological role, catalyzes the phosphorylation of methylthioribose into methylthioribose-1-phosphate. This chain is Methylthioribose kinase (mtnK), found in Bacillus subtilis (strain 168).